The chain runs to 747 residues: Meprin A subunit alpha (747 aa).

The first 20 residues, 1–20 (MLWIQPACLLSLIFSAHIAA), serve as a signal peptide directing secretion. Residues 21–64 (VSIKHLLNGSDHDTDVGEQKDIFEINLAAGLNLFQGDILLPRTR) constitute a propeptide that is removed on maturation. Asn-28 and Asn-139 each carry an N-linked (GlcNAc...) asparagine glycan. A Peptidase M12A domain is found at 65–259 (NAMRDPSSRW…IRLNRMYNCT (195 aa)). Residues 65–713 (NAMRDPSSRW…FYAGERCQAM (649 aa)) lie on the Extracellular side of the membrane. 3 disulfides stabilise this stretch: Cys-106–Cys-258, Cys-127–Cys-146, and Cys-268–Cys-430. A Zn(2+)-binding site is contributed by His-154. Glu-155 is an active-site residue. Zn(2+) contacts are provided by His-158 and His-164. 7 N-linked (GlcNAc...) asparagine glycosylation sites follow: Asn-221, Asn-257, Asn-317, Asn-413, Asn-439, Asn-533, and Asn-540. The 170-residue stretch at 263-432 (TLLDHCDFEK…ITLTETPCPA (170 aa)) folds into the MAM domain. Residues 433-594 (GVWTIRNISQ…GDSLIIFVDF (162 aa)) enclose the MATH domain. A disordered region spans residues 638-663 (ESLPSSLGQRHPSRQKRSVENTGPME). In terms of domain architecture, EGF-like spans 671–711 (FRDPCDPNPCQNEGTCVNVKGMASCRCVSGHAFFYAGERCQ). 3 cysteine pairs are disulfide-bonded: Cys-675–Cys-686, Cys-680–Cys-695, and Cys-697–Cys-710. Residues 714-741 (HVHGSLLGLLIGCIAGLIFLTFVTFSTT) form a helical membrane-spanning segment. The Cytoplasmic portion of the chain corresponds to 742–747 (NGKLRQ).

As to quaternary structure, homotetramer consisting of disulfide-linked alpha subunits, homooligomer consisting of disulfide-linked alpha subunit homodimers, or heterotetramer of two alpha and two beta subunits formed by non-covalent association of two disulfide-linked heterodimers. Genetic factors determine which oligomer(s) will be formed (strain-specific). Interacts with MBL2 through its carbohydrate moiety. This interaction may inhibit its catalytic activity. Zn(2+) serves as cofactor. In terms of processing, N-glycosylated; contains GlcNAc, galactose, mannose and a small amount of fucose. As to expression, kidney, intestinal brush borders and salivary ducts.

It localises to the membrane. It carries out the reaction Hydrolysis of protein and peptide substrates preferentially on carboxyl side of hydrophobic residues.. Inhibited by metal ion chelators EDTA and 1,10-phenanthroline, bradykinin analogs, cysteine, CONA65, and several hydroxamate compounds, particularly tyrosine hydroxamate. Not inhibited by 3,4-dichloroisocourmarin, soybean trypsin inhibitor, or the cysteine proteinase inhibitors iodoacetic acid and E-64. This chain is Meprin A subunit alpha (Mep1a), found in Mus musculus (Mouse).